The following is a 160-amino-acid chain: Anaerobic nitrite reductase AHB1 (160 aa).

The region spanning 8–157 (VFTEEQEALV…LVAAIKAEMN (150 aa)) is the Globin domain. The Homodimerization motif lies at 41-45 (EIAPT). The heme b site is built by S51, K65, H69, R99, S103, and H104. A Homodimerization motif is present at residues 111-123 (DEHFEVAKYALLE).

This sequence belongs to the plant globin family. In terms of assembly, homodimer. Heme b is required as a cofactor. In terms of tissue distribution, expressed in roots and rosette leaves.

The protein resides in the cytoplasm. It is found in the nucleus. The enzyme catalyses Fe(III)-heme b-[protein] + nitric oxide + H2O = Fe(II)-heme b-[protein] + nitrite + 2 H(+). Functionally, phytoglobin that reduces nitrite to nitric oxide (NO) under anoxic conditions (e.g. during flooding or in waterlogged soil). May not function as an oxygen storage or transport protein. Has an unusually high affinity for O(2) through an hexacoordinate heme iron because of a very low dissociation constant. The chain is Anaerobic nitrite reductase AHB1 from Arabidopsis thaliana (Mouse-ear cress).